We begin with the raw amino-acid sequence, 895 residues long: DNA double-strand break repair Rad50 ATPase (895 aa).

Residues 32–38 and glutamine 137 each bind ATP; that span reads NGAGKSS. Residues 183 to 253 are a coiled coil; the sequence is SDYDYLKNEL…LNAQLETIKK (71 aa). Positions 411 to 507 constitute a Zinc-hook domain; it reads RAEINSSLMQ…ERKHQKKLLD (97 aa). Residues cysteine 455 and cysteine 458 each contribute to the Zn(2+) site. 2 coiled-coil regions span residues 464–510 and 618–647; these read TEKS…DRIN and ENSL…AMDE.

Belongs to the SMC family. RAD50 subfamily. Homodimer. Forms a heterotetramer composed of two Mre11 subunits and two Rad50 subunits. Zn(2+) is required as a cofactor.

Its function is as follows. Part of the Rad50/Mre11 complex, which is involved in the early steps of DNA double-strand break (DSB) repair. The complex may facilitate opening of the processed DNA ends to aid in the recruitment of HerA and NurA. Rad50 controls the balance between DNA end bridging and DNA resection via ATP-dependent structural rearrangements of the Rad50/Mre11 complex. The polypeptide is DNA double-strand break repair Rad50 ATPase (Thermoplasma volcanium (strain ATCC 51530 / DSM 4299 / JCM 9571 / NBRC 15438 / GSS1)).